The following is a 203-amino-acid chain: Ras-related protein Rab-13 (203 aa).

GTP is bound by residues Ser-17, Gly-18, Gly-20, Lys-21, Thr-22, Cys-23, and Thr-40. Position 22 (Thr-22) interacts with Mg(2+). A Switch 1 motif is present at residues 31–45 (DSFNNTYISTIGIDF). Thr-40 is a Mg(2+) binding site. Residues Lys-46 and Lys-58 each participate in a glycyl lysine isopeptide (Lys-Gly) (interchain with G-Cter in ubiquitin) cross-link. Asp-63 is a binding site for Mg(2+). A Switch 2 motif is present at residues 63–80 (DTAGQERFKTITTAYYRG). 6 residues coordinate GTP: Gly-66, Asn-121, Lys-122, Asp-124, Ala-152, and Lys-153. Residues 173-203 (SGGRRSGNSHKAPGTDLKPCDKKNTSKCSLG) form a disordered region. Position 178 is a phosphoserine (Ser-178). Position 200 is a cysteine methyl ester (Cys-200). A lipid anchor (S-geranylgeranyl cysteine) is attached at Cys-200. Residues 201–203 (SLG) constitute a propeptide, removed in mature form.

It belongs to the small GTPase superfamily. Rab family. In terms of assembly, interacts (GTP-bound form) with MICALL2; competes with RAB8A and is involved in tight junctions assembly. Interacts (GTP-bound form) with MICALL1. Interacts (GTP-bound form) with MICAL1, MICAL3, MICALCL, EHBP1 and EHBP1L1; ternary complexes of RAB8A, RAB13 and either MICAL1 or EHBP1L1 are possible. Interacts with PRKACA; downstream effector of RAB13 involved in tight junction assembly. Interacts with GRB2; may recruit RAB13 to the leading edge of migrating endothelial cells where it can activate RHOA. Interacts (isoprenylated form) with PDE6D; dissociates RAB13 from membranes. Interacts with BICDL2/BICDR2. Interacts with LEPROT and LEPROTL1. Mg(2+) is required as a cofactor. In terms of processing, ubiquitinated via 'Lys-11'-linked ubiquitination on Lys-46 and Lys-58; impairing the recruitment of guanosine diphosphate (GDP) dissociation inhibitor 1/GDI1.

It localises to the cell membrane. Its subcellular location is the cytoplasmic vesicle membrane. The protein localises to the cell junction. It is found in the tight junction. The protein resides in the golgi apparatus. It localises to the trans-Golgi network membrane. Its subcellular location is the recycling endosome membrane. The protein localises to the cell projection. It is found in the lamellipodium. It carries out the reaction GTP + H2O = GDP + phosphate + H(+). With respect to regulation, regulated by guanine nucleotide exchange factors (GEFs) including DENND1C, which promote the exchange of bound GDP for free GTP. Regulated by GTPase activating proteins (GAPs) which increase the GTP hydrolysis activity. Inhibited by GDP dissociation inhibitors (GDIs). Activated in response to insulin. In terms of biological role, the small GTPases Rab are key regulators of intracellular membrane trafficking, from the formation of transport vesicles to their fusion with membranes. Rabs cycle between an inactive GDP-bound form and an active GTP-bound form that is able to recruit to membranes different sets of downstream effectors directly responsible for vesicle formation, movement, tethering and fusion. RAB13 is involved in endocytic recycling and regulates the transport to the plasma membrane of transmembrane proteins like the tight junction protein OCLN/occludin. Thereby, it regulates the assembly and the activity of tight junctions. Moreover, it may also regulate tight junction assembly by activating the PKA signaling pathway and by reorganizing the actin cytoskeleton through the activation of the downstream effectors PRKACA and MICALL2 respectively. Through its role in tight junction assembly, may play a role in the establishment of Sertoli cell barrier. Plays also a role in angiogenesis through regulation of endothelial cells chemotaxis. Also involved in neurite outgrowth. Has also been proposed to play a role in post-Golgi membrane trafficking from the TGN to the recycling endosome. Finally, it has been involved in insulin-induced transport to the plasma membrane of the glucose transporter GLUT4 and therefore may play a role in glucose homeostasis. In Canis lupus familiaris (Dog), this protein is Ras-related protein Rab-13 (RAB13).